Reading from the N-terminus, the 199-residue chain is Ribonuclease P protein subunit p25 (199 aa).

Positions 1–11 (MENFRKVRSEE) are enriched in basic and acidic residues. Disordered stretches follow at residues 1–31 (MENF…FADL) and 146–199 (PRQL…DRTA). Phosphoserine is present on serine 172. The span at 190-199 (PEAENEDRTA) shows a compositional bias: acidic residues.

It belongs to the histone-like Alba family. As to quaternary structure, component of nuclear RNase P and RNase MRP ribonucleoproteins. RNase P consists of a catalytic RNA moiety and 10 different protein chains; POP1, POP4, POP5, POP7, RPP14, RPP21, RPP25, RPP30, RPP38 and RPP40. Within the RNase P complex, POP1, POP7 and RPP25 form the 'finger' subcomplex, POP5, RPP14, RPP40 and homodimeric RPP30 form the 'palm' subcomplex, and RPP21, POP4 and RPP38 form the 'wrist' subcomplex. All subunits of the RNase P complex interact with the catalytic RNA. Several subunits of RNase P are also part of the RNase MRP complex. RNase MRP consists of a catalytic RNA moiety and about 8 protein subunits; POP1, POP7, RPP25, RPP30, RPP38, RPP40 and possibly also POP4 and POP5. POP7 forms a heterodimer with RPP25 that binds to the P3 stem loop of the catalytic RNA.

Its subcellular location is the nucleus. It localises to the nucleolus. Its function is as follows. Component of ribonuclease P, a ribonucleoprotein complex that generates mature tRNA molecules by cleaving their 5'-ends. Also a component of the MRP ribonuclease complex, which cleaves pre-rRNA sequences. The polypeptide is Ribonuclease P protein subunit p25 (Rpp25) (Rattus norvegicus (Rat)).